The primary structure comprises 307 residues: Acetyl-coenzyme A carboxylase carboxyl transferase subunit beta (307 aa).

Residues 25-294 (VWTKCTSCEQ…PLVVPIEQPK (270 aa)) form the CoA carboxyltransferase N-terminal domain. Residues Cys29, Cys32, Cys48, and Cys51 each contribute to the Zn(2+) site. A C4-type zinc finger spans residues 29 to 51 (CTSCEQVLYHADLERNLEVCPKC).

Belongs to the AccD/PCCB family. Acetyl-CoA carboxylase is a heterohexamer composed of biotin carboxyl carrier protein (AccB), biotin carboxylase (AccC) and two subunits each of ACCase subunit alpha (AccA) and ACCase subunit beta (AccD). Zn(2+) is required as a cofactor.

Its subcellular location is the cytoplasm. The enzyme catalyses N(6)-carboxybiotinyl-L-lysyl-[protein] + acetyl-CoA = N(6)-biotinyl-L-lysyl-[protein] + malonyl-CoA. It participates in lipid metabolism; malonyl-CoA biosynthesis; malonyl-CoA from acetyl-CoA: step 1/1. In terms of biological role, component of the acetyl coenzyme A carboxylase (ACC) complex. Biotin carboxylase (BC) catalyzes the carboxylation of biotin on its carrier protein (BCCP) and then the CO(2) group is transferred by the transcarboxylase to acetyl-CoA to form malonyl-CoA. The chain is Acetyl-coenzyme A carboxylase carboxyl transferase subunit beta from Photobacterium profundum (strain SS9).